We begin with the raw amino-acid sequence, 147 residues long: Large ribosomal subunit protein uL13 (147 aa).

Belongs to the universal ribosomal protein uL13 family. Part of the 50S ribosomal subunit.

In terms of biological role, this protein is one of the early assembly proteins of the 50S ribosomal subunit, although it is not seen to bind rRNA by itself. It is important during the early stages of 50S assembly. In Streptomyces griseus subsp. griseus (strain JCM 4626 / CBS 651.72 / NBRC 13350 / KCC S-0626 / ISP 5235), this protein is Large ribosomal subunit protein uL13.